Consider the following 475-residue polypeptide: Argininosuccinate lyase (475 aa).

Belongs to the lyase 1 family. Argininosuccinate lyase subfamily.

It localises to the cytoplasm. The catalysed reaction is 2-(N(omega)-L-arginino)succinate = fumarate + L-arginine. The protein operates within amino-acid biosynthesis; L-arginine biosynthesis; L-arginine from L-ornithine and carbamoyl phosphate: step 3/3. In Streptomyces griseus subsp. griseus (strain JCM 4626 / CBS 651.72 / NBRC 13350 / KCC S-0626 / ISP 5235), this protein is Argininosuccinate lyase.